The chain runs to 162 residues: Beta-lactoglobulin-3 (162 aa).

2 disulfide bridges follow: cysteine 66–cysteine 160 and cysteine 106–cysteine 119.

It belongs to the calycin superfamily. Lipocalin family. Monomer.

The protein localises to the secreted. Lactoglobulin is the primary component of whey, it binds retinol and is probably involved in the transport of that molecule. This chain is Beta-lactoglobulin-3 (LGB3), found in Felis catus (Cat).